We begin with the raw amino-acid sequence, 542 residues long: Chaperonin GroEL 2 (542 aa).

Residues Thr-30 to Pro-33, Lys-51, Asp-87 to Thr-91, Gly-415, and Asp-496 contribute to the ATP site.

Belongs to the chaperonin (HSP60) family. In terms of assembly, forms a cylinder of 14 subunits composed of two heptameric rings stacked back-to-back. Interacts with the co-chaperonin GroES.

The protein localises to the cytoplasm. The catalysed reaction is ATP + H2O + a folded polypeptide = ADP + phosphate + an unfolded polypeptide.. Its function is as follows. Together with its co-chaperonin GroES, plays an essential role in assisting protein folding. The GroEL-GroES system forms a nano-cage that allows encapsulation of the non-native substrate proteins and provides a physical environment optimized to promote and accelerate protein folding. This is Chaperonin GroEL 2 from Mesorhizobium japonicum (strain LMG 29417 / CECT 9101 / MAFF 303099) (Mesorhizobium loti (strain MAFF 303099)).